The sequence spans 372 residues: NAD(P)H-quinone oxidoreductase subunit 1 (372 aa).

The next 8 helical transmembrane spans lie at 27-47 (AVWM…GVLI), 97-117 (ALFT…YLIV), 128-148 (LGIG…GLLM), 166-186 (AAQS…IAMM), 204-224 (ILGW…IAAL), 254-274 (FALF…MVAI), 308-328 (AVGI…AILL), and 351-371 (VGLV…IAFG).

Belongs to the complex I subunit 1 family. NDH-1 is composed of at least 11 different subunits.

The protein resides in the cellular thylakoid membrane. It catalyses the reaction a plastoquinone + NADH + (n+1) H(+)(in) = a plastoquinol + NAD(+) + n H(+)(out). It carries out the reaction a plastoquinone + NADPH + (n+1) H(+)(in) = a plastoquinol + NADP(+) + n H(+)(out). Its function is as follows. NDH-1 shuttles electrons from an unknown electron donor, via FMN and iron-sulfur (Fe-S) centers, to quinones in the respiratory and/or the photosynthetic chain. The immediate electron acceptor for the enzyme in this species is believed to be plastoquinone. Couples the redox reaction to proton translocation, and thus conserves the redox energy in a proton gradient. The protein is NAD(P)H-quinone oxidoreductase subunit 1 of Cyanothece sp. (strain PCC 7425 / ATCC 29141).